Consider the following 1008-residue polypeptide: Probable transport protein MmpL10 (1008 aa).

Helical transmembrane passes span 23-43, 202-222, 225-245, 257-277, 301-321, 340-360, 389-409, 835-855, 862-882, 895-915, 940-960, and 961-981; these read WPWV…MTVP, IELV…RNPI, LLPL…VSGV, MIVL…VFLI, ALIS…ITFL, IGIA…LVLA, VAYL…ASLV, DLQL…MALL, IYLV…CVLV, VPGL…MLLA, VITA…LSSI, and ATVV…TFIV.

Belongs to the resistance-nodulation-cell division (RND) (TC 2.A.6) family. MmpL subfamily.

The protein resides in the cell membrane. The polypeptide is Probable transport protein MmpL10 (mmpL10) (Mycobacterium leprae (strain TN)).